The following is a 133-amino-acid chain: Small ribosomal subunit protein uS11 (133 aa).

Positions 1–23 (MPPKTRGAVRKPRKKDKKNIALG) are disordered. The span at 7 to 17 (GAVRKPRKKDK) shows a compositional bias: basic residues.

It belongs to the universal ribosomal protein uS11 family. As to quaternary structure, part of the 30S ribosomal subunit. Interacts with proteins S7 and S18. Binds to IF-3.

In terms of biological role, located on the platform of the 30S subunit, it bridges several disparate RNA helices of the 16S rRNA. Forms part of the Shine-Dalgarno cleft in the 70S ribosome. In Pseudarthrobacter chlorophenolicus (strain ATCC 700700 / DSM 12829 / CIP 107037 / JCM 12360 / KCTC 9906 / NCIMB 13794 / A6) (Arthrobacter chlorophenolicus), this protein is Small ribosomal subunit protein uS11.